The sequence spans 155 residues: uncharacterized protein (155 aa).

The N-terminal stretch at 1-19 is a signal peptide; that stretch reads MPLSKTLVQKLQQAGMAIA.

This is an uncharacterized protein from Haemophilus influenzae (strain ATCC 51907 / DSM 11121 / KW20 / Rd).